The chain runs to 659 residues: Methionine--tRNA ligase (659 aa).

A 'HIGH' region motif is present at residues tyrosine 13 to histidine 23. The short motif at lysine 308–serine 312 is the 'KMSKS' region element. Lysine 311 is a binding site for ATP. Residues aspartate 559–lysine 659 enclose the tRNA-binding domain.

Belongs to the class-I aminoacyl-tRNA synthetase family. MetG type 2B subfamily. As to quaternary structure, homodimer.

The protein resides in the cytoplasm. It carries out the reaction tRNA(Met) + L-methionine + ATP = L-methionyl-tRNA(Met) + AMP + diphosphate. In terms of biological role, is required not only for elongation of protein synthesis but also for the initiation of all mRNA translation through initiator tRNA(fMet) aminoacylation. This is Methionine--tRNA ligase from Staphylococcus haemolyticus (strain JCSC1435).